Here is a 954-residue protein sequence, read N- to C-terminus: MTTPTEFQFTDYQPYDFANRRHIGPSPAEMTDMLKVIGFNSLDGLIDATLPPTIRQKAPLVWGAPMTEREALDKLRETANKNKVLVSLIGQGYYGTITPPVIQRNILENPAWYTAYTPYQPEISQGRLEALLNYQTMVCDLTGLDVANASLLDEATAAAEGMAMAERVSKSKAKAFFVDADCHPQTIALIRTRAEPLGWSVIVGNPFTDLDPVDVFGAIFQYPGTHGHVHDFTGLIARLHQAGAISVVAADILALTLLKSPGEMGADIAVGSSQRFGVPVGYGGPHAAYMAVKDAIKRSMPGRLVGVSVDARGNRAYRLSLQTREQHIRREKATSNICTAQVLLAVMASMYAVFHGPDGIKAIAQQVHQKAVLMAKGLEKLGYKVEPESFFDTITVDVGHMQGLILRAAVAEGVNLRKVGETKIGMSLDERTRPATLEAVWRAFGGNFTIADFEPSYLLPKGLLRTTDYLAHPIFHMNRAESEMTRYIRRLSDRDLALDRSMIPLGSCTMKLNATAEMLPITWPEFSDIHPFVPADQALGYREMLDDLTEKLCAVTGYDAFSMQPNSGAQGEYAGLLTIRNYHIANGEGHRDVCLIPTSAHGTNPASAQMVGMKVVVVKVRENGDIDLDDFRTKAEEHAASLSCCMITYPSTHGVFEETVKEICELVHKHGGQVYLDGANMNAMVGLSRPGDIGSDVSHLNLHKTFCIPHGGGGPGMGPIGVKAHLAPHLPGHPETDGRPGAVSAAAFGSASILPISWSYCLMMGGEGLTQATKVAILNANYIAARLKGAYDVLYKSKTGRVAHECIIDTRPLVDSSGVTVDDVAKRLIDCGFHAPTMSWPVSGTLMIEPTESETKAELDRFCEAMLAIREEARAIEDGRMDKINNPLKNAPHTVEDLVGEWDRPYSREQACFPPGAFRVDKYWSPVNRVDNVYGDRNLICTCPPVESYAEAAE.

At Lys-704 the chain carries N6-(pyridoxal phosphate)lysine.

Belongs to the GcvP family. As to quaternary structure, the glycine cleavage system is composed of four proteins: P, T, L and H. Requires pyridoxal 5'-phosphate as cofactor.

It catalyses the reaction N(6)-[(R)-lipoyl]-L-lysyl-[glycine-cleavage complex H protein] + glycine + H(+) = N(6)-[(R)-S(8)-aminomethyldihydrolipoyl]-L-lysyl-[glycine-cleavage complex H protein] + CO2. Functionally, the glycine cleavage system catalyzes the degradation of glycine. The P protein binds the alpha-amino group of glycine through its pyridoxal phosphate cofactor; CO(2) is released and the remaining methylamine moiety is then transferred to the lipoamide cofactor of the H protein. The protein is Glycine dehydrogenase (decarboxylating) of Rhizobium etli (strain CIAT 652).